A 58-amino-acid chain; its full sequence is Large ribosomal subunit protein uL30 (58 aa).

The protein belongs to the universal ribosomal protein uL30 family. As to quaternary structure, part of the 50S ribosomal subunit.

This Pseudomonas entomophila (strain L48) protein is Large ribosomal subunit protein uL30.